Reading from the N-terminus, the 360-residue chain is Phenylalanine--tRNA ligase alpha subunit (360 aa).

A Mg(2+)-binding site is contributed by Glu260.

It belongs to the class-II aminoacyl-tRNA synthetase family. Phe-tRNA synthetase alpha subunit type 1 subfamily. In terms of assembly, tetramer of two alpha and two beta subunits. It depends on Mg(2+) as a cofactor.

The protein resides in the cytoplasm. The catalysed reaction is tRNA(Phe) + L-phenylalanine + ATP = L-phenylalanyl-tRNA(Phe) + AMP + diphosphate + H(+). The protein is Phenylalanine--tRNA ligase alpha subunit of Agrobacterium fabrum (strain C58 / ATCC 33970) (Agrobacterium tumefaciens (strain C58)).